The primary structure comprises 256 residues: uncharacterized protein (256 aa).

In terms of domain architecture, HTH deoR-type spans 7–62 (PAERQKTLLNLISKQSVISINNLVNILGVSHMTVRRDIQKLEEDGKVISVSGGVQL). The segment at residues 24–43 (ISINNLVNILGVSHMTVRRD) is a DNA-binding region (H-T-H motif).

This is an uncharacterized protein from Haemophilus influenzae (strain ATCC 51907 / DSM 11121 / KW20 / Rd).